Here is a 607-residue protein sequence, read N- to C-terminus: Bifunctional lysine-specific demethylase and histidyl-hydroxylase NO66 (607 aa).

Disordered stretches follow at residues 23 to 121 and 139 to 184; these read GPTI…IKTN and ATQH…GEVE. A compositionally biased stretch (polar residues) spans 25–37; it reads TIQQTGATKTPKT. A compositionally biased stretch (basic residues) spans 39–58; sequence SKIRRLSIRKSTRKIKHALK. Over residues 156 to 167 the composition is skewed to basic and acidic residues; the sequence is DKTPVKRVRSDT. The region spanning 188 to 405 is the JmjC domain; that stretch reads EEAEKMFEWL…DLMEKLVPAA (218 aa). Positions 328, 330, and 371 each coordinate Fe cation.

It belongs to the ROX family. NO66 subfamily. Fe(2+) serves as cofactor.

The protein resides in the nucleus. The catalysed reaction is L-histidyl-[protein] + 2-oxoglutarate + O2 = (3S)-3-hydroxy-L-histidyl-[protein] + succinate + CO2. It catalyses the reaction N(6),N(6)-dimethyl-L-lysyl(36)-[histone H3] + 2 2-oxoglutarate + 2 O2 = L-lysyl(36)-[histone H3] + 2 formaldehyde + 2 succinate + 2 CO2. Oxygenase that can act as both a histone lysine demethylase and a ribosomal histidine hydroxylase. Specifically demethylates 'Lys-4' (H3K4me) and 'Lys-36' (H3K36me) of histone H3, thereby playing a central role in histone code. Also catalyzes the hydroxylation of 60S ribosomal protein L8. In Branchiostoma floridae (Florida lancelet), this protein is Bifunctional lysine-specific demethylase and histidyl-hydroxylase NO66.